Reading from the N-terminus, the 376-residue chain is Glutamate 5-kinase (376 aa).

ATP is bound at residue K15. Substrate contacts are provided by S56, D143, and N155. Residue 175–176 coordinates ATP; it reads SD. The PUA domain maps to 281–358; it reads KGTLTIDAGA…PDVMSILGIT (78 aa).

Belongs to the glutamate 5-kinase family.

The protein localises to the cytoplasm. The enzyme catalyses L-glutamate + ATP = L-glutamyl 5-phosphate + ADP. Its pathway is amino-acid biosynthesis; L-proline biosynthesis; L-glutamate 5-semialdehyde from L-glutamate: step 1/2. Functionally, catalyzes the transfer of a phosphate group to glutamate to form L-glutamate 5-phosphate. This is Glutamate 5-kinase from Rhodopseudomonas palustris (strain BisB18).